A 535-amino-acid chain; its full sequence is Glucose-6-phosphate isomerase (535 aa).

Glu-347 functions as the Proton donor in the catalytic mechanism. Catalysis depends on residues His-378 and Lys-493.

This sequence belongs to the GPI family.

The protein resides in the cytoplasm. The enzyme catalyses alpha-D-glucose 6-phosphate = beta-D-fructose 6-phosphate. Its pathway is carbohydrate biosynthesis; gluconeogenesis. It participates in carbohydrate degradation; glycolysis; D-glyceraldehyde 3-phosphate and glycerone phosphate from D-glucose: step 2/4. Its function is as follows. Catalyzes the reversible isomerization of glucose-6-phosphate to fructose-6-phosphate. This Chlamydia felis (strain Fe/C-56) (Chlamydophila felis) protein is Glucose-6-phosphate isomerase.